The sequence spans 1159 residues: WASH complex subunit 5 (1159 aa).

The protein belongs to the strumpellin family. In terms of assembly, component of the WASH complex.

The protein resides in the early endosome. Functionally, acts at least in part as component of the WASH complex which seems to regulate washc1 nucleation-promoting factor (NPF) activity and is required for its membrane targeting during endosomal sorting. This is WASH complex subunit 5 from Danio rerio (Zebrafish).